We begin with the raw amino-acid sequence, 208 residues long: N-(5'-phosphoribosyl)anthranilate isomerase (208 aa).

The protein belongs to the TrpF family.

It catalyses the reaction N-(5-phospho-beta-D-ribosyl)anthranilate = 1-(2-carboxyphenylamino)-1-deoxy-D-ribulose 5-phosphate. It participates in amino-acid biosynthesis; L-tryptophan biosynthesis; L-tryptophan from chorismate: step 3/5. The chain is N-(5'-phosphoribosyl)anthranilate isomerase from Lactiplantibacillus plantarum (strain ATCC BAA-793 / NCIMB 8826 / WCFS1) (Lactobacillus plantarum).